The chain runs to 421 residues: Gamma-glutamyl phosphate reductase (421 aa).

Belongs to the gamma-glutamyl phosphate reductase family.

It is found in the cytoplasm. It carries out the reaction L-glutamate 5-semialdehyde + phosphate + NADP(+) = L-glutamyl 5-phosphate + NADPH + H(+). The protein operates within amino-acid biosynthesis; L-proline biosynthesis; L-glutamate 5-semialdehyde from L-glutamate: step 2/2. Its function is as follows. Catalyzes the NADPH-dependent reduction of L-glutamate 5-phosphate into L-glutamate 5-semialdehyde and phosphate. The product spontaneously undergoes cyclization to form 1-pyrroline-5-carboxylate. This is Gamma-glutamyl phosphate reductase from Brucella abortus (strain 2308).